The sequence spans 625 residues: Arginine--tRNA ligase (625 aa).

The 'HIGH' region motif lies at 128–138; that stretch reads VNPTKPLHMGH.

The protein belongs to the class-I aminoacyl-tRNA synthetase family.

The protein resides in the cytoplasm. The enzyme catalyses tRNA(Arg) + L-arginine + ATP = L-arginyl-tRNA(Arg) + AMP + diphosphate. The sequence is that of Arginine--tRNA ligase (argS) from Pyrococcus abyssi (strain GE5 / Orsay).